The sequence spans 372 residues: Queuine tRNA-ribosyltransferase (372 aa).

Asp89 acts as the Proton acceptor in catalysis. Substrate contacts are provided by residues 89–93, Asp143, Gln185, and Gly212; that span reads DSGGF. An RNA binding region spans residues 243 to 249; the sequence is GVGKPED. Catalysis depends on Asp262, which acts as the Nucleophile. Positions 267-271 are RNA binding; important for wobble base 34 recognition; sequence TRNAR. Zn(2+) contacts are provided by Cys300, Cys302, Cys305, and His331.

It belongs to the queuine tRNA-ribosyltransferase family. In terms of assembly, homodimer. Within each dimer, one monomer is responsible for RNA recognition and catalysis, while the other monomer binds to the replacement base PreQ1. Zn(2+) serves as cofactor.

It carries out the reaction 7-aminomethyl-7-carbaguanine + guanosine(34) in tRNA = 7-aminomethyl-7-carbaguanosine(34) in tRNA + guanine. Its pathway is tRNA modification; tRNA-queuosine biosynthesis. In terms of biological role, catalyzes the base-exchange of a guanine (G) residue with the queuine precursor 7-aminomethyl-7-deazaguanine (PreQ1) at position 34 (anticodon wobble position) in tRNAs with GU(N) anticodons (tRNA-Asp, -Asn, -His and -Tyr). Catalysis occurs through a double-displacement mechanism. The nucleophile active site attacks the C1' of nucleotide 34 to detach the guanine base from the RNA, forming a covalent enzyme-RNA intermediate. The proton acceptor active site deprotonates the incoming PreQ1, allowing a nucleophilic attack on the C1' of the ribose to form the product. After dissociation, two additional enzymatic reactions on the tRNA convert PreQ1 to queuine (Q), resulting in the hypermodified nucleoside queuosine (7-(((4,5-cis-dihydroxy-2-cyclopenten-1-yl)amino)methyl)-7-deazaguanosine). The chain is Queuine tRNA-ribosyltransferase from Pseudomonas aeruginosa (strain LESB58).